The chain runs to 297 residues: Cell division protein ZipA (297 aa).

A topological domain (periplasmic) is located at residue Met-1. A helical membrane pass occupies residues 2–22 (EIGLREWLILIGIIVIAGILF). The Cytoplasmic segment spans residues 23-297 (DGWRRMRGGK…FERRALTQKR (275 aa)). The tract at residues 48–150 (DEEGGSAEVL…GAAPASSSVK (103 aa)) is disordered. A compositionally biased stretch (basic and acidic residues) spans 83-92 (ARDREREPKP). Over residues 124–133 (LFADSDDDFA) the composition is skewed to acidic residues. The span at 136-149 (NNRSSGAAPASSSV) shows a compositional bias: polar residues.

Belongs to the ZipA family. As to quaternary structure, interacts with FtsZ via their C-terminal domains.

It is found in the cell inner membrane. Its function is as follows. Essential cell division protein that stabilizes the FtsZ protofilaments by cross-linking them and that serves as a cytoplasmic membrane anchor for the Z ring. Also required for the recruitment to the septal ring of downstream cell division proteins. This Pseudomonas putida (strain ATCC 700007 / DSM 6899 / JCM 31910 / BCRC 17059 / LMG 24140 / F1) protein is Cell division protein ZipA.